The sequence spans 156 residues: MGKIRLMHAKLHRVRVTEANVGYIGSITIDPQLLDRVGILPLEEVDIVNLNNGKRFSTYVFPGEAGTGEVCPNGGAALLCQPGDLLIIYAYEERDRSEVLQQGHHARVIVADENNQIKQFFHQTLIPTEEGKGVSFHSDEIILNGQPKNNPILSEN.

S26 (schiff-base intermediate with substrate; via pyruvic acid) is an active-site residue. Residue S26 is modified to Pyruvic acid (Ser). A substrate-binding site is contributed by T58. Y59 functions as the Proton donor in the catalytic mechanism. 74–76 (GGA) lines the substrate pocket.

This sequence belongs to the PanD family. In terms of assembly, heterooctamer of four alpha and four beta subunits. Pyruvate is required as a cofactor. In terms of processing, is synthesized initially as an inactive proenzyme, which is activated by self-cleavage at a specific serine bond to produce a beta-subunit with a hydroxyl group at its C-terminus and an alpha-subunit with a pyruvoyl group at its N-terminus.

It is found in the cytoplasm. It catalyses the reaction L-aspartate + H(+) = beta-alanine + CO2. Its pathway is cofactor biosynthesis; (R)-pantothenate biosynthesis; beta-alanine from L-aspartate: step 1/1. Its function is as follows. Catalyzes the pyruvoyl-dependent decarboxylation of aspartate to produce beta-alanine. The sequence is that of Aspartate 1-decarboxylase from Gloeothece citriformis (strain PCC 7424) (Cyanothece sp. (strain PCC 7424)).